We begin with the raw amino-acid sequence, 164 residues long: CB1 cannabinoid receptor-interacting protein 1 (164 aa).

It belongs to the CNRIP family. As to quaternary structure, interacts with the cannabinoid receptor CNR1 (via C-terminus). Does not interact with cannabinoid receptor CNR2. As to expression, highly expressed in brain. Also detected in heart, lung, intestine, kidney, testis, spleen, liver and muscle (at protein level).

In terms of biological role, suppresses cannabinoid receptor CNR1-mediated tonic inhibition of voltage-gated calcium channels. In Mus musculus (Mouse), this protein is CB1 cannabinoid receptor-interacting protein 1 (Cnrip1).